A 275-amino-acid polypeptide reads, in one-letter code: Fos-related antigen 1 (275 aa).

Disordered stretches follow at residues 1–33 and 71–115; these read MYRDFGEPGPSSGAGSAYGRPAQPQQAQTQTVQ and TYPQ…VRRE. The segment covering 7 to 33 has biased composition (low complexity); sequence EPGPSSGAGSAYGRPAQPQQAQTQTVQ. Positions 107 to 170 constitute a bZIP domain; the sequence is EERRRVRRER…ERLELVLEAH (64 aa). Residues 109–129 are basic motif; sequence RRRVRRERNKLAAAKCRNRRK. The leucine-zipper stretch occupies residues 135-163; the sequence is LQAETDKLEDEKSGLQREIEELQKQKERL. Residues 171-184 show a composition bias toward basic and acidic residues; sequence RPICKIPEEDKKDT. The segment at 171–275 is disordered; it reads RPICKIPEED…PLGSPTLLAL (105 aa). Composition is skewed to low complexity over residues 185–194, 219–237, and 256–275; these read GGTSSTSGAG, LHTPTLMTTPSLTPFTPSL, and SSSSGDPSSDPLGSPTLLAL. At S269 the chain carries Phosphoserine.

It belongs to the bZIP family. Fos subfamily. As to quaternary structure, heterodimer. Interacts with the BAF multiprotein chromatin-remodeling complex subunits SMARCB1 and SMARCD1. Interacts with ARID1A and JUN.

It localises to the nucleus. This chain is Fos-related antigen 1 (Fosl1), found in Rattus norvegicus (Rat).